Consider the following 438-residue polypeptide: MAELISREGNKVEFKVAVPAAEVNRAYEQVWAGLARDVRVPGFRPGKAPRKVIEGRVGKGYVEQEVRDRLLQVHYPQAARELKLSLVDATIDPQDLNNGKDFTFNVRGETYPEVTLGDWSDLKLEATSPEITDDVLNRTLSDLQERNATFESVDRAIEASDQVTIEEQGEDGGTYPVYLDVAEAHVRDALLGKNKGDTVEITVPAHQHGDHEHAEHTVTVKIMDVKTKQLQELNDEFASSLNFESLDRLRADLRNELQRRAQQEGDNARREEFVAHLTERMQADIPQALLERRREAMMQEIQDDLSRQGVKWSEYETFMKEQGKLDEFMADLSKNAETRVKRDLALEKLAEDLKVQVSDAEFNQTMTMLAQANGLSPEQLSKQLGPNGINSYYASIVRERALQQALAQLSGPQAETVAADQGEQQAEGQEESAEKSEE.

Residues 160–231 enclose the PPIase FKBP-type domain; it reads SDQVTIEEQG…IMDVKTKQLQ (72 aa). Positions 407 to 438 are disordered; it reads AQLSGPQAETVAADQGEQQAEGQEESAEKSEE. Residues 418-427 are compositionally biased toward low complexity; that stretch reads AADQGEQQAE.

Belongs to the FKBP-type PPIase family. Tig subfamily.

The protein localises to the cytoplasm. It catalyses the reaction [protein]-peptidylproline (omega=180) = [protein]-peptidylproline (omega=0). Involved in protein export. Acts as a chaperone by maintaining the newly synthesized protein in an open conformation. Functions as a peptidyl-prolyl cis-trans isomerase. This is Trigger factor from Deinococcus deserti (strain DSM 17065 / CIP 109153 / LMG 22923 / VCD115).